The sequence spans 446 residues: Exodeoxyribonuclease 7 large subunit (446 aa).

The protein belongs to the XseA family. As to quaternary structure, heterooligomer composed of large and small subunits.

Its subcellular location is the cytoplasm. The catalysed reaction is Exonucleolytic cleavage in either 5'- to 3'- or 3'- to 5'-direction to yield nucleoside 5'-phosphates.. Bidirectionally degrades single-stranded DNA into large acid-insoluble oligonucleotides, which are then degraded further into small acid-soluble oligonucleotides. The polypeptide is Exodeoxyribonuclease 7 large subunit (Streptococcus pneumoniae (strain Hungary19A-6)).